Here is a 350-residue protein sequence, read N- to C-terminus: Protein O-mannose kinase (350 aa).

At methionine 1 the chain carries N-acetylmethionine. The Cytoplasmic portion of the chain corresponds to 1–20 (MEKQPQNKRRGLAPREVPPA). A helical; Signal-anchor for type II membrane protein transmembrane segment spans residues 21-43 (VGLLLIMALMNTLLYLCLDHFFI). The Lumenal portion of the chain corresponds to 44 to 350 (APRQSIVDPR…AVMSQAREML (307 aa)). The Protein kinase domain maps to 81–350 (VRQLKRVGEG…AVMSQAREML (270 aa)). 3 N-linked (GlcNAc...) asparagine glycosylation sites follow: asparagine 165, asparagine 220, and asparagine 235.

It belongs to the protein kinase superfamily. Ser/Thr protein kinase family. STKL subfamily.

The protein resides in the endoplasmic reticulum membrane. The catalysed reaction is 3-O-[beta-D-GalNAc-(1-&gt;3)-beta-D-GlcNAc-(1-&gt;4)-alpha-D-Man]-L-Thr-[protein] + ATP = 3-O-[beta-D-GalNAc-(1-&gt;3)-beta-D-GlcNAc-(1-&gt;4)-(O-6-P-alpha-D-Man)]-Thr-[protein] + ADP + H(+). Protein O-mannose kinase that specifically mediates phosphorylation at the 6-position of an O-mannose of the trisaccharide (N-acetylgalactosamine (GalNAc)-beta-1,3-N-acetylglucosamine (GlcNAc)-beta-1,4-mannose) to generate phosphorylated O-mannosyl trisaccharide (N-acetylgalactosamine-beta-1,3-N-acetylglucosamine-beta-1,4-(phosphate-6-)mannose). Phosphorylated O-mannosyl trisaccharide is a carbohydrate structure present in alpha-dystroglycan (DAG1), which is required for binding laminin G-like domain-containing extracellular proteins with high affinity. Only shows kinase activity when the GalNAc-beta-3-GlcNAc-beta-terminus is linked to the 4-position of O-mannose, suggesting that this disaccharide serves as the substrate recognition motif. This Macaca fascicularis (Crab-eating macaque) protein is Protein O-mannose kinase (POMK).